A 260-amino-acid chain; its full sequence is 1-(5-phosphoribosyl)-5-[(5-phosphoribosylamino)methylideneamino] imidazole-4-carboxamide isomerase (260 aa).

D8 serves as the catalytic Proton acceptor. D130 functions as the Proton donor in the catalytic mechanism.

Belongs to the HisA/HisF family.

It localises to the cytoplasm. The catalysed reaction is 1-(5-phospho-beta-D-ribosyl)-5-[(5-phospho-beta-D-ribosylamino)methylideneamino]imidazole-4-carboxamide = 5-[(5-phospho-1-deoxy-D-ribulos-1-ylimino)methylamino]-1-(5-phospho-beta-D-ribosyl)imidazole-4-carboxamide. It functions in the pathway amino-acid biosynthesis; L-histidine biosynthesis; L-histidine from 5-phospho-alpha-D-ribose 1-diphosphate: step 4/9. This chain is 1-(5-phosphoribosyl)-5-[(5-phosphoribosylamino)methylideneamino] imidazole-4-carboxamide isomerase, found in Chlorobaculum tepidum (strain ATCC 49652 / DSM 12025 / NBRC 103806 / TLS) (Chlorobium tepidum).